We begin with the raw amino-acid sequence, 2171 residues long: ATP-binding cassette sub-family C member Sur (2171 aa).

The Extracellular segment spans residues 1–36 (MKQLFNIIHCDHLNGHVRSIYDNLNTDICGIDRVRR). The chain crosses the membrane as a helical span at residues 37 to 57 (VFTFFSIFLLLFGLMFVCSRY). At 58–71 (KKCHKTLLTFHNGR) the chain is on the cytoplasmic side. The helical transmembrane segment at 72–92 (AAISLLLLALNSFDLARIFLP) threads the bilayer. Residues 93-112 (HQNVRNLNRLFQSSPRDLNY) lie on the Extracellular side of the membrane. A helical membrane pass occupies residues 113 to 133 (LVVIGSGELWNALFSTLLTLM). The Cytoplasmic segment spans residues 134–145 (LMLYHRMVERKK). Residues 146-166 (ATVFLYASTAVEALTFALLSN) traverse the membrane as a helical segment. The Extracellular portion of the chain corresponds to 167 to 182 (ELFELVRYEDFLELQT). The chain crosses the membrane as a helical span at residues 183-203 (CLVAMSAMCMVSLAMLDGLTV). The Cytoplasmic portion of the chain corresponds to 204–224 (YKECYHDDYLDDYGKIGYKHS). A helical transmembrane segment spans residues 225–245 (MATFYSKSCFWWLTPLLWLGY). Topologically, residues 246-299 (KEPLELEDLGQMKLEDSARSHYDHFLYIYTEKKKKSNSSPSLWYCYIKNSWQMF) are extracellular. The chain crosses the membrane as a helical span at residues 300–320 (ALGGILKLAGDLFALIGPLAI). Residues 321 to 447 (QKIVEYIEQL…MTEDTRNIME (127 aa)) are Cytoplasmic-facing. The ABC transmembrane type-1 1 domain maps to 344–622 (NEVANVLLST…FPITVPIIIA (279 aa)). Residues 388–434 (DSSDSAGQVQSTSSTSDEKQKNDDSMATPEHVDNPSEPNISHDIGSI) are disordered. Over residues 389–402 (SSDSAGQVQSTSST) the composition is skewed to polar residues. Residues 403–421 (SDEKQKNDDSMATPEHVDN) show a composition bias toward basic and acidic residues. A helical membrane pass occupies residues 448–468 (FFLIIHYAWAIPFKIAVVIYL). The Extracellular portion of the chain corresponds to 469-474 (LYMNLG). Residues 475-495 (ISAVIGSIACIVIMTPLQFFI) form a helical membrane-spanning segment. Over 496–562 (GNAMSKNAEV…KDATFWTLMA (67 aa)) the chain is Cytoplasmic. Residues 563–583 (VLTHIATVLITFVTLGVYVWL) traverse the membrane as a helical segment. The Extracellular portion of the chain corresponds to 584 to 600 (HRDQEFDLNASRLFSSL). A helical transmembrane segment spans residues 601–621 (ALFQQLTVPLLIFPITVPIII). Topologically, residues 622–1409 (AARVSTRRLE…KYGKISDDIY (788 aa)) are cytoplasmic. The ABC transporter 1 domain maps to 785-1014 (VSINDGLFTW…QPRITAEWNA (230 aa)). 822-829 (GKNGSGKT) is a binding site for ATP. A compositionally biased stretch (basic residues) spans 1141–1151 (RRRHTLGRRGS). Disordered stretches follow at residues 1141–1177 (RRRH…SISG) and 1209–1265 (PRVQ…DHVR). A compositionally biased stretch (low complexity) spans 1160–1176 (LSGLSTLTATSESSSIS). Polar residues predominate over residues 1212–1232 (QSWQPPQHVTHHQPLSRNASS). The segment covering 1242 to 1251 (DVKKSEEARR) has biased composition (basic and acidic residues). A helical transmembrane segment spans residues 1410-1430 (LMYIRAAGLPIITIFFITALI). One can recognise an ABC transmembrane type-1 2 domain in the interval 1421 to 1715 (ITIFFITALI…AVTKSPSELR (295 aa)). The Extracellular portion of the chain corresponds to 1431 to 1468 (WQCLRVYTDIWLQQWSNVHGRVASKGHVVLHPSEQDHE). A helical membrane pass occupies residues 1469-1489 (VTYYFRMYAAISCVCIIMALV). The Cytoplasmic segment spans residues 1490-1558 (STPAGQYAGC…QRLLQFTLLC (69 aa)). A helical membrane pass occupies residues 1559-1579 (LSAILINVTITPWILVLTLPI). At 1580 to 1655 (CGAYYLIQKF…YALLNTSHRW (76 aa)) the chain is on the extracellular side. Residues 1656–1676 (LGVSLDYLGGCIVFVATVTAL) traverse the membrane as a helical segment. The Cytoplasmic segment spans residues 1677 to 1718 (TAASVSCRRHYEATTSPSASASPSPFETYAVTKSPSELRPSP). A helical transmembrane segment spans residues 1719–1739 (SLVGLAINYTLLVPIYLNWVV). The Extracellular portion of the chain corresponds to 1740–2171 (KLLADMEMYA…GLLEKGASKW (432 aa)). Residues 1766 to 1778 (ADADADADADVDA) show a composition bias toward acidic residues. 2 disordered regions span residues 1766–1844 (ADAD…GHEN) and 1866–1902 (NFHH…DKDK). 2 stretches are compositionally biased toward basic and acidic residues: residues 1793–1804 (EVDRSSQSDAGD) and 1887–1902 (VIKD…DKDK). One can recognise an ABC transporter 2 domain in the interval 1930–2165 (IHFDNVSLRY…EGSVFRGLLE (236 aa)). 1964–1971 (GRTGSGKS) contributes to the ATP binding site.

The protein belongs to the ABC transporter superfamily. ABCC family. Conjugate transporter (TC 3.A.1.208) subfamily. As to expression, highly expressed in adult heart. Detected at lower levels in head and abdomen.

It localises to the membrane. In terms of biological role, may function as regulatory subunit of ATP-sensitive potassium channels (KATP) and form KATP channels with a member of the ATP-sensitive inward rectifier potassium channel family. May also have channel activity by itself (in vitro). May protect the heart during hypoxia. May protect against heart failure under conditions of tachycardic stress. In Drosophila melanogaster (Fruit fly), this protein is ATP-binding cassette sub-family C member Sur (Sur).